The primary structure comprises 107 residues: Universal stress protein B homolog (107 aa).

2 helical membrane-spanning segments follow: residues 6 to 26 and 86 to 106; these read TILF…LTAL and VREL…AAFI.

This sequence belongs to the universal stress protein B family.

It localises to the cell inner membrane. The protein is Universal stress protein B homolog of Vibrio parahaemolyticus serotype O3:K6 (strain RIMD 2210633).